We begin with the raw amino-acid sequence, 121 residues long: UPF0102 protein DehaBAV1_0707 (121 aa).

It belongs to the UPF0102 family.

This chain is UPF0102 protein DehaBAV1_0707, found in Dehalococcoides mccartyi (strain ATCC BAA-2100 / JCM 16839 / KCTC 5957 / BAV1).